A 317-amino-acid chain; its full sequence is Aspartate carbamoyltransferase catalytic subunit (317 aa).

Positions 64 and 65 each coordinate carbamoyl phosphate. K92 is an L-aspartate binding site. 3 residues coordinate carbamoyl phosphate: R114, H142, and Q145. L-aspartate-binding residues include R176 and R230. Carbamoyl phosphate is bound by residues G271 and P272.

It belongs to the aspartate/ornithine carbamoyltransferase superfamily. ATCase family. In terms of assembly, heterododecamer (2C3:3R2) of six catalytic PyrB chains organized as two trimers (C3), and six regulatory PyrI chains organized as three dimers (R2).

It catalyses the reaction carbamoyl phosphate + L-aspartate = N-carbamoyl-L-aspartate + phosphate + H(+). Its pathway is pyrimidine metabolism; UMP biosynthesis via de novo pathway; (S)-dihydroorotate from bicarbonate: step 2/3. In terms of biological role, catalyzes the condensation of carbamoyl phosphate and aspartate to form carbamoyl aspartate and inorganic phosphate, the committed step in the de novo pyrimidine nucleotide biosynthesis pathway. This Nitratidesulfovibrio vulgaris (strain DP4) (Desulfovibrio vulgaris) protein is Aspartate carbamoyltransferase catalytic subunit.